A 158-amino-acid polypeptide reads, in one-letter code: Transcription elongation factor GreA (158 aa).

It belongs to the GreA/GreB family.

Its function is as follows. Necessary for efficient RNA polymerase transcription elongation past template-encoded arresting sites. The arresting sites in DNA have the property of trapping a certain fraction of elongating RNA polymerases that pass through, resulting in locked ternary complexes. Cleavage of the nascent transcript by cleavage factors such as GreA or GreB allows the resumption of elongation from the new 3'terminus. GreA releases sequences of 2 to 3 nucleotides. This chain is Transcription elongation factor GreA, found in Methylobacterium nodulans (strain LMG 21967 / CNCM I-2342 / ORS 2060).